The primary structure comprises 217 residues: MEIERINEDTIKFYISYLDLEERGFNQEDVWYDREKSEELFWDMMDELKYEEEFSPEGPLWIQVQALKHGLEVFVTKATIGGKGEDGFDVTLSSPDELAEEKIEKLLEENFNPVKKEALGDDDTLEFILEFRDFEDAISLSRATGLENLVTKLYSYQGKYYLNVEFPENKYDESNIDNAVSILLEYGLESNLTGYMLAEYGKVIFDVPALKQIRKHF.

The protein belongs to the MecA family. As to quaternary structure, homodimer.

Functionally, enables the recognition and targeting of unfolded and aggregated proteins to the ClpC protease or to other proteins involved in proteolysis. This Listeria monocytogenes serotype 4b (strain CLIP80459) protein is Adapter protein MecA.